Reading from the N-terminus, the 156-residue chain is Transcription antitermination protein NusB (156 aa).

It belongs to the NusB family.

Its function is as follows. Involved in transcription antitermination. Required for transcription of ribosomal RNA (rRNA) genes. Binds specifically to the boxA antiterminator sequence of the ribosomal RNA (rrn) operons. The polypeptide is Transcription antitermination protein NusB (Rickettsia rickettsii (strain Iowa)).